We begin with the raw amino-acid sequence, 159 residues long: SsrA-binding protein (159 aa).

It belongs to the SmpB family.

The protein resides in the cytoplasm. Functionally, required for rescue of stalled ribosomes mediated by trans-translation. Binds to transfer-messenger RNA (tmRNA), required for stable association of tmRNA with ribosomes. tmRNA and SmpB together mimic tRNA shape, replacing the anticodon stem-loop with SmpB. tmRNA is encoded by the ssrA gene; the 2 termini fold to resemble tRNA(Ala) and it encodes a 'tag peptide', a short internal open reading frame. During trans-translation Ala-aminoacylated tmRNA acts like a tRNA, entering the A-site of stalled ribosomes, displacing the stalled mRNA. The ribosome then switches to translate the ORF on the tmRNA; the nascent peptide is terminated with the 'tag peptide' encoded by the tmRNA and targeted for degradation. The ribosome is freed to recommence translation, which seems to be the essential function of trans-translation. The protein is SsrA-binding protein of Coxiella burnetii (strain RSA 493 / Nine Mile phase I).